The primary structure comprises 97 residues: YcgL domain-containing protein PST_1364 (97 aa).

The YcgL domain maps to 3 to 87 (LICSIYKSPR…AEDEYIEHLP (85 aa)).

In Stutzerimonas stutzeri (strain A1501) (Pseudomonas stutzeri), this protein is YcgL domain-containing protein PST_1364.